A 150-amino-acid polypeptide reads, in one-letter code: Arginine repressor (150 aa).

Belongs to the ArgR family.

Its subcellular location is the cytoplasm. It functions in the pathway amino-acid biosynthesis; L-arginine biosynthesis [regulation]. Regulates arginine biosynthesis genes. This is Arginine repressor from Clostridium acetobutylicum (strain ATCC 824 / DSM 792 / JCM 1419 / IAM 19013 / LMG 5710 / NBRC 13948 / NRRL B-527 / VKM B-1787 / 2291 / W).